Reading from the N-terminus, the 353-residue chain is Photosystem II protein D1 (353 aa).

Helical transmembrane passes span 29–46 (YVGW…TATI), 118–133 (HFLI…EWEL), and 142–156 (WICV…AATA). H118 contributes to the chlorophyll a binding site. Y126 is a pheophytin a binding site. Residues D170 and E189 each coordinate [CaMn4O5] cluster. The helical transmembrane segment at 197–218 (FHMLGVAGVFGGSLFSAMHGSL) threads the bilayer. H198 provides a ligand contact to chlorophyll a. Residues H215 and 264–265 (SF) each bind a quinone. Position 215 (H215) interacts with Fe cation. A Fe cation-binding site is contributed by H272. A helical transmembrane segment spans residues 274 to 288 (FLAAWPVVGIWFTSL). Positions 332, 333, 342, and 344 each coordinate [CaMn4O5] cluster. Positions 345 to 353 (AVKAPSIIG) are excised as a propeptide.

The protein belongs to the reaction center PufL/M/PsbA/D family. As to quaternary structure, PSII is composed of 1 copy each of membrane proteins PsbA, PsbB, PsbC, PsbD, PsbE, PsbF, PsbH, PsbI, PsbJ, PsbK, PsbL, PsbM, PsbT, PsbX, PsbY, PsbZ, Psb30/Ycf12, peripheral proteins PsbO, CyanoQ (PsbQ), PsbU, PsbV and a large number of cofactors. It forms dimeric complexes. The D1/D2 heterodimer binds P680, chlorophylls that are the primary electron donor of PSII, and subsequent electron acceptors. It shares a non-heme iron and each subunit binds pheophytin, quinone, additional chlorophylls, carotenoids and lipids. D1 provides most of the ligands for the Mn4-Ca-O5 cluster of the oxygen-evolving complex (OEC). There is also a Cl(-1) ion associated with D1 and D2, which is required for oxygen evolution. The PSII complex binds additional chlorophylls, carotenoids and specific lipids. is required as a cofactor. Post-translationally, tyr-161 forms a radical intermediate that is referred to as redox-active TyrZ, YZ or Y-Z. In terms of processing, C-terminally processed by CtpA; processing is essential to allow assembly of the oxygen-evolving complex and thus photosynthetic growth.

Its subcellular location is the cellular thylakoid membrane. It catalyses the reaction 2 a plastoquinone + 4 hnu + 2 H2O = 2 a plastoquinol + O2. Functionally, photosystem II (PSII) is a light-driven water:plastoquinone oxidoreductase that uses light energy to abstract electrons from H(2)O, generating O(2) and a proton gradient subsequently used for ATP formation. It consists of a core antenna complex that captures photons, and an electron transfer chain that converts photonic excitation into a charge separation. The D1/D2 (PsbA/PsbD) reaction center heterodimer binds P680, the primary electron donor of PSII as well as several subsequent electron acceptors. The sequence is that of Photosystem II protein D1 from Prochlorothrix hollandica.